Consider the following 239-residue polypeptide: DNA repair protein RecO (239 aa).

It belongs to the RecO family.

In terms of biological role, involved in DNA repair and RecF pathway recombination. The chain is DNA repair protein RecO from Tolumonas auensis (strain DSM 9187 / NBRC 110442 / TA 4).